A 533-amino-acid polypeptide reads, in one-letter code: 2-isopropylmalate synthase (533 aa).

Positions 8–269 (IIIFDTTLRD…YYNPFLGRPA (262 aa)) constitute a Pyruvate carboxyltransferase domain. Residues Asp17, His208, His210, and Asn244 each coordinate Mn(2+). The regulatory domain stretch occupies residues 408–533 (RLELVQVSCG…VSANPAKASL (126 aa)).

This sequence belongs to the alpha-IPM synthase/homocitrate synthase family. LeuA type 1 subfamily. In terms of assembly, homodimer. The cofactor is Mn(2+).

It is found in the cytoplasm. It carries out the reaction 3-methyl-2-oxobutanoate + acetyl-CoA + H2O = (2S)-2-isopropylmalate + CoA + H(+). It functions in the pathway amino-acid biosynthesis; L-leucine biosynthesis; L-leucine from 3-methyl-2-oxobutanoate: step 1/4. Functionally, catalyzes the condensation of the acetyl group of acetyl-CoA with 3-methyl-2-oxobutanoate (2-ketoisovalerate) to form 3-carboxy-3-hydroxy-4-methylpentanoate (2-isopropylmalate). The sequence is that of 2-isopropylmalate synthase from Picosynechococcus sp. (strain ATCC 27264 / PCC 7002 / PR-6) (Agmenellum quadruplicatum).